A 236-amino-acid chain; its full sequence is Purine nucleoside phosphorylase DeoD-type (236 aa).

Position 5 (histidine 5) interacts with a purine D-ribonucleoside. Phosphate is bound by residues glycine 21, arginine 25, arginine 44, and 88 to 91 (RVGS). Residues 180-182 (DME) and 204-205 (SD) each bind a purine D-ribonucleoside. Aspartate 205 functions as the Proton donor in the catalytic mechanism.

Belongs to the PNP/UDP phosphorylase family. Homohexamer; trimer of homodimers.

It carries out the reaction a purine D-ribonucleoside + phosphate = a purine nucleobase + alpha-D-ribose 1-phosphate. It catalyses the reaction a purine 2'-deoxy-D-ribonucleoside + phosphate = a purine nucleobase + 2-deoxy-alpha-D-ribose 1-phosphate. In terms of biological role, catalyzes the reversible phosphorolytic breakdown of the N-glycosidic bond in the beta-(deoxy)ribonucleoside molecules, with the formation of the corresponding free purine bases and pentose-1-phosphate. This Aliivibrio salmonicida (strain LFI1238) (Vibrio salmonicida (strain LFI1238)) protein is Purine nucleoside phosphorylase DeoD-type.